We begin with the raw amino-acid sequence, 307 residues long: 4-hydroxy-3-methylbut-2-enyl diphosphate reductase (307 aa).

Cysteine 13 provides a ligand contact to [4Fe-4S] cluster. (2E)-4-hydroxy-3-methylbut-2-enyl diphosphate-binding residues include histidine 42 and histidine 75. Dimethylallyl diphosphate contacts are provided by histidine 42 and histidine 75. Positions 42 and 75 each coordinate isopentenyl diphosphate. Cysteine 97 is a binding site for [4Fe-4S] cluster. Histidine 125 provides a ligand contact to (2E)-4-hydroxy-3-methylbut-2-enyl diphosphate. Histidine 125 contacts dimethylallyl diphosphate. Histidine 125 lines the isopentenyl diphosphate pocket. The active-site Proton donor is the glutamate 127. Residue threonine 165 coordinates (2E)-4-hydroxy-3-methylbut-2-enyl diphosphate. Cysteine 195 serves as a coordination point for [4Fe-4S] cluster. Positions 223, 224, 225, and 267 each coordinate (2E)-4-hydroxy-3-methylbut-2-enyl diphosphate. Positions 223, 224, 225, and 267 each coordinate dimethylallyl diphosphate. Serine 223, serine 224, asparagine 225, and serine 267 together coordinate isopentenyl diphosphate.

Belongs to the IspH family. The cofactor is [4Fe-4S] cluster.

It carries out the reaction isopentenyl diphosphate + 2 oxidized [2Fe-2S]-[ferredoxin] + H2O = (2E)-4-hydroxy-3-methylbut-2-enyl diphosphate + 2 reduced [2Fe-2S]-[ferredoxin] + 2 H(+). The enzyme catalyses dimethylallyl diphosphate + 2 oxidized [2Fe-2S]-[ferredoxin] + H2O = (2E)-4-hydroxy-3-methylbut-2-enyl diphosphate + 2 reduced [2Fe-2S]-[ferredoxin] + 2 H(+). It functions in the pathway isoprenoid biosynthesis; dimethylallyl diphosphate biosynthesis; dimethylallyl diphosphate from (2E)-4-hydroxy-3-methylbutenyl diphosphate: step 1/1. The protein operates within isoprenoid biosynthesis; isopentenyl diphosphate biosynthesis via DXP pathway; isopentenyl diphosphate from 1-deoxy-D-xylulose 5-phosphate: step 6/6. Catalyzes the conversion of 1-hydroxy-2-methyl-2-(E)-butenyl 4-diphosphate (HMBPP) into a mixture of isopentenyl diphosphate (IPP) and dimethylallyl diphosphate (DMAPP). Acts in the terminal step of the DOXP/MEP pathway for isoprenoid precursor biosynthesis. In Chlamydia trachomatis serovar L2b (strain UCH-1/proctitis), this protein is 4-hydroxy-3-methylbut-2-enyl diphosphate reductase.